We begin with the raw amino-acid sequence, 365 residues long: Geissoschizine synthase (365 aa).

Cys51 is a Zn(2+) binding site. Asn52 serves as a coordination point for NADP(+). 7 residues coordinate Zn(2+): His73, Glu74, Cys104, Cys107, Cys110, Cys118, and Cys169. NADP(+) contacts are provided by Leu195, Gly197, Leu198, Ser217, Thr218, Ser219, Lys222, Arg262, Val281, Ala283, Ser305, Thr307, and Arg352.

The protein belongs to the zinc-containing alcohol dehydrogenase family. Class-III subfamily. Homodimer. The cofactor is Zn(2+). Mainly expressed in roots and, to a lower level, in leaves.

The catalysed reaction is (19E)-geissoschizine + NADP(+) = 4,21-dehydrogeissoschizine + NADPH. The protein operates within alkaloid biosynthesis; ajmaline biosynthesis. Functionally, alcohol dehydrogenase involved in the biosynthesis of ajmaline-type monoterpenoid indole alkaloids (MIAs) natural products, important plant-derived pharmaceuticals used in the therapy of heart disorders. Catalyzes iminium reduction on 4,21-dehydrogeissoschizine to produce 19E-geissoschizine, precursor of vomilenine, an intermediate chemical in the biosynthesis of ajmaline. This Rauvolfia serpentina (Serpentine wood) protein is Geissoschizine synthase.